Here is a 385-residue protein sequence, read N- to C-terminus: 4-hydroxy-3-methylbut-2-en-1-yl diphosphate synthase (flavodoxin) (385 aa).

[4Fe-4S] cluster contacts are provided by Cys282, Cys285, Cys317, and Glu324.

It belongs to the IspG family. It depends on [4Fe-4S] cluster as a cofactor.

It catalyses the reaction (2E)-4-hydroxy-3-methylbut-2-enyl diphosphate + oxidized [flavodoxin] + H2O + 2 H(+) = 2-C-methyl-D-erythritol 2,4-cyclic diphosphate + reduced [flavodoxin]. The protein operates within isoprenoid biosynthesis; isopentenyl diphosphate biosynthesis via DXP pathway; isopentenyl diphosphate from 1-deoxy-D-xylulose 5-phosphate: step 5/6. Functionally, converts 2C-methyl-D-erythritol 2,4-cyclodiphosphate (ME-2,4cPP) into 1-hydroxy-2-methyl-2-(E)-butenyl 4-diphosphate. The protein is 4-hydroxy-3-methylbut-2-en-1-yl diphosphate synthase (flavodoxin) of Nocardia farcinica (strain IFM 10152).